Reading from the N-terminus, the 175-residue chain is NADH-quinone oxidoreductase subunit B (175 aa).

[4Fe-4S] cluster is bound by residues Cys54, Cys55, Cys119, and Cys149.

The protein belongs to the complex I 20 kDa subunit family. As to quaternary structure, NDH-1 is composed of at least 14 different subunits, Nqo1 to Nqo14. The complex has a L-shaped structure, with the hydrophobic arm (subunits Nqo7, Nqo8, Nqo10 to Nqo14) embedded in the inner membrane and the hydrophilic peripheral arm (subunits Nqo1 to Nqo6, Nqo9) protruding into the bacterial cytoplasm. The hydrophilic domain contains all the redox centers. NADH-quinone oxidoreductase forms a supercomplex with ubiquinol-cytochrome c reductase complex (complex III or cytochrome b-c1 complex) and cytochrome c oxidase (complex IV), which stabilizes the NADH-quinone oxidoreductase complex. [4Fe-4S] cluster is required as a cofactor.

The protein localises to the cell inner membrane. The enzyme catalyses a quinone + NADH + 5 H(+)(in) = a quinol + NAD(+) + 4 H(+)(out). Its function is as follows. NDH-1 shuttles electrons from NADH, via FMN and iron-sulfur (Fe-S) centers, to quinones in the respiratory chain. The immediate electron acceptor for the enzyme in this species is believed to be ubiquinone. Couples the redox reaction to proton translocation (for every two electrons transferred, four hydrogen ions are translocated across the cytoplasmic membrane), and thus conserves the redox energy in a proton gradient. In Paracoccus denitrificans (strain Pd 1222), this protein is NADH-quinone oxidoreductase subunit B.